Consider the following 1005-residue polypeptide: MMHHPHPFGSNLANSSEPQQPSGQYLNPAADAYNFDTFEDSDKFSPKGNVAALRNVIHGQLDMKTPTGNSSRYQKPAPPPVDSTPSWAKNVKVYEPNGYVDPHLNKHNMGRVLDGPVNPNKYFQGVPPASYSQVKHNESKPPVPPSTKPPHSAAQALQAQVLQSSKAPSQPQQSQKTSYRIPYDVALDPRHHLGEFDIDDSASIISSCISTFGESSEIAGFSAAAEQRHLYEQYRKKLMEEKNELKEGSETPCVSLSEKVMTSSTENLKNGNNQQNQQPEPQPPSSSIFNSELTPFGHVAPVAKQFEPTNFPPFSPEKESEIKRSIDLESSQLLVKSKSPAPYSTSSTDHYGTIRRKHKPVAIDLSKSSPNLASQSPSNLFFGASFEEKQNRSPMTSTPSYKEQGFKNDSLNDSLNQAFEIASSIETTKNAYEAPPTPKSASHDRSISDTYPVSSSTTSTWPSHTTTPTTTTAAAPIAAVAPQTYTEQQPMSTSMSSSVMSTNMDEPIVVGSHQQIPQQSPDSSPERNEDMSQWYRKMFKQMHRKGEDGSNEGKEQHFINPSNVTDGIGRTTPTASNLGRSRENLSFNQHRPDHPSSYFDSLEHGPNDQYNNQERVKQSNEEELLRLKAEKLAEELRKEKERKHSFIPSSAPSLQNNMDRLNSLLYDFSSDIQEPAHRDYTPQPVMTATAVYKFEPRSARELPLNRGDIIRIIREVDGYWMEGERNGRSGIFPTSYVQINTGNQGDSQKMRAIYPFTARSDTELSLKRGEIITRRRQIDSNWLEGSNQIGIVGIFPASYVEPIEQVEQHIPTIVPNRPKTPKIEDQVYNQVYKPNETVIMQSNQGYYDKAAVVPNNKVRFDLPSGSDSNLQMSLNPHQNQFPPTHTQTSTQQPSNYGMKKIEYEREKVVEEVPPMHMDQYRKLNDEPKNPKKDTNILMNAASLIPKGSEMYRAVYPYQPQKEDELQLYTNDIIFVVEKCDDGWFIGTSLRTGDFGIFPGNYVKRH.

7 disordered regions span residues 1–31 (MMHH…PAAD), 61–86 (LDMK…STPS), 99–153 (YVDP…PHSA), 243–292 (NELK…FNSE), 386–409 (FEEK…FKND), 427–475 (TTKN…TAAA), and 542–622 (MHRK…SNEE). The segment covering 11–25 (NLANSSEPQQPSGQY) has biased composition (polar residues). Residues 260–269 (VMTSSTENLK) are compositionally biased toward polar residues. Positions 270–279 (NGNNQQNQQP) are enriched in low complexity. Residues 392-409 (RSPMTSTPSYKEQGFKND) are compositionally biased toward polar residues. Over residues 448 to 475 (SDTYPVSSSTTSTWPSHTTTPTTTTAAA) the composition is skewed to low complexity. The 69-residue stretch at 499 to 567 (VMSTNMDEPI…FINPSNVTDG (69 aa)) folds into the SoHo domain. A compositionally biased stretch (basic and acidic residues) spans 544-557 (RKGEDGSNEGKEQH). A compositionally biased stretch (polar residues) spans 559-589 (INPSNVTDGIGRTTPTASNLGRSRENLSFNQ). The stretch at 610–642 (YNNQERVKQSNEEELLRLKAEKLAEELRKEKER) forms a coiled coil. 3 SH3 domains span residues 683-742 (QPVM…INTG), 745-805 (GDSQ…PIEQ), and 946-1005 (KGSE…VKRH).

As to quaternary structure, may interact with deb-1. As to expression, expressed in body wall muscles, muscle arm attachment sites at the nerve ring, all non-striated muscles, and distal tip cells of the gonad. Highly expressed in the origins and insertions of the vulval and anal depressor muscles and the spicule-associated and diagonal muscles of the male tail. Expressed in small puncta throughout the uterus, stomatointestinal muscle and proximal gonadal sheath tissues. Not expressed in the pharynx.

The protein resides in the cell junction. Its subcellular location is the adherens junction. It is found in the cell membrane. The protein localises to the focal adhesion. Required for organization of sarcomeres in body wall muscles and for maintaining normal mitochondrial position in myocytes. This chain is Sorbin and SH3 domain-containing protein 1 homolog, found in Caenorhabditis elegans.